The sequence spans 371 residues: tRNA-specific 2-thiouridylase MnmA (371 aa).

ATP-binding positions include 13-20 and Met39; that span reads GMSGGVDS. An interaction with target base in tRNA region spans residues 99-101; sequence NPD. Cys104 acts as the Nucleophile in catalysis. Residues Cys104 and Cys200 are joined by a disulfide bond. Residue Gly128 coordinates ATP. The segment at 150 to 152 is interaction with tRNA; the sequence is KDQ. The Cysteine persulfide intermediate role is filled by Cys200. Residues 308 to 309 are interaction with tRNA; the sequence is RY.

The protein belongs to the MnmA/TRMU family.

Its subcellular location is the cytoplasm. The catalysed reaction is S-sulfanyl-L-cysteinyl-[protein] + uridine(34) in tRNA + AH2 + ATP = 2-thiouridine(34) in tRNA + L-cysteinyl-[protein] + A + AMP + diphosphate + H(+). In terms of biological role, catalyzes the 2-thiolation of uridine at the wobble position (U34) of tRNA, leading to the formation of s(2)U34. The sequence is that of tRNA-specific 2-thiouridylase MnmA from Bacillus mycoides (strain KBAB4) (Bacillus weihenstephanensis).